The sequence spans 275 residues: tRNA pseudouridine synthase A (275 aa).

D62 functions as the Nucleophile in the catalytic mechanism. Residue Y124 coordinates substrate.

Belongs to the tRNA pseudouridine synthase TruA family. In terms of assembly, homodimer.

The enzyme catalyses uridine(38/39/40) in tRNA = pseudouridine(38/39/40) in tRNA. In terms of biological role, formation of pseudouridine at positions 38, 39 and 40 in the anticodon stem and loop of transfer RNAs. The protein is tRNA pseudouridine synthase A of Herminiimonas arsenicoxydans.